Consider the following 120-residue polypeptide: MSIRTEKVASLLQRELSAIFEKELPRSGPLATVTEVKVTADLGIARVYVSIIGSEAQRAELMEFLHTETKALRKILSSKIRNQFRRIPELEFYEDRLFEQANRIEELLKSVRRGPAEEQL.

Belongs to the RbfA family. In terms of assembly, monomer. Binds 30S ribosomal subunits, but not 50S ribosomal subunits or 70S ribosomes.

The protein localises to the cytoplasm. One of several proteins that assist in the late maturation steps of the functional core of the 30S ribosomal subunit. Associates with free 30S ribosomal subunits (but not with 30S subunits that are part of 70S ribosomes or polysomes). Required for efficient processing of 16S rRNA. May interact with the 5'-terminal helix region of 16S rRNA. The sequence is that of Ribosome-binding factor A from Chlorobaculum parvum (strain DSM 263 / NCIMB 8327) (Chlorobium vibrioforme subsp. thiosulfatophilum).